We begin with the raw amino-acid sequence, 374 residues long: MSPPNQSLEGLPQEASNRSLNVTGAWDPEVLQALRISLVVVLSVITLATVLSNAFVLTTILLTKKLHTPANYLIGSLATTDLLVSILVMPISIAYTTTRTWNFGQILCDIWVSSDITCCTASILHLCVIALDRYWAITDALEYSKRRTAGHAAAMIAAVWIISICISIPPLFWRQATAHEEMSDCLVNTSQISYTIYSTCGAFYIPSILLIILYGRIYVAARSRILNPPSLYGKRFTTAQLITGSAGSSLCSLNPSLHESHTHTVGSPLFFNQVKIKLADSILERKRISAARERKATKTLGIILGAFIICWLPFFVVSLVLPICRDSCWIHPALFDFFTWLGYLNSLINPVIYTVFNEDFRQAFQKVVHFRKIS.

Topologically, residues M1–R35 are extracellular. N-linked (GlcNAc...) asparagine glycans are attached at residues N5, N17, and N21. The chain crosses the membrane as a helical span at residues I36–L61. Over L62–Y72 the chain is Cytoplasmic. Residues L73–A94 traverse the membrane as a helical segment. Residues Y95–I106 are Extracellular-facing. A helical membrane pass occupies residues L107 to L131. The cysteines at positions 108 and 185 are disulfide-linked. Serotonin contacts are provided by D115 and C119. Residues D132–Y134 carry the DRY motif; important for ligand-induced conformation changes motif. The Cytoplasmic segment spans residues D132–H151. The helical transmembrane segment at A152–W173 threads the bilayer. The Extracellular portion of the chain corresponds to R174–Q191. A helical membrane pass occupies residues I192–G215. Topologically, residues R216–T297 are cytoplasmic. Residues K298–I323 traverse the membrane as a helical segment. Serotonin is bound at residue S318. Over C324 to P332 the chain is Extracellular. A helical membrane pass occupies residues A333–F356. The NPxxY motif; important for ligand-induced conformation changes and signaling signature appears at N349–Y353. At N357–S374 the chain is on the cytoplasmic side.

It belongs to the G-protein coupled receptor 1 family. As to quaternary structure, homodimer. Heterodimer with HTR1B. Detected in the motor column in spinal cord, and in several cranial motor nuclei, including nucleus ambiguous, oculomotoris, trochelaris and abducens. Detected in gamma motor neurons in the lumbar spinal cord. Detected in proprioceptive sensory neurons in dorsal root ganglia.

It is found in the cell membrane. Functionally, G-protein coupled receptor for 5-hydroxytryptamine (serotonin). Also functions as a receptor for ergot alkaloid derivatives, various anxiolytic and antidepressant drugs and other psychoactive substances. Ligand binding causes a conformation change that triggers signaling via guanine nucleotide-binding proteins (G proteins) and modulates the activity of downstream effectors, such as adenylate cyclase. HTR1D is coupled to G(i)/G(o) G alpha proteins and mediates inhibitory neurotransmission by inhibiting adenylate cyclase activity. Regulates the release of 5-hydroxytryptamine in the brain, and thereby affects neural activity. May also play a role in regulating the release of other neurotransmitters. May play a role in vasoconstriction. In Mus musculus (Mouse), this protein is 5-hydroxytryptamine receptor 1D (Htr1d).